The chain runs to 175 residues: RNA pyrophosphohydrolase (175 aa).

The Nudix hydrolase domain maps to Gly-6–Lys-149. The Nudix box motif lies at Gly-38–Gly-59.

This sequence belongs to the Nudix hydrolase family. RppH subfamily. A divalent metal cation serves as cofactor.

Functionally, accelerates the degradation of transcripts by removing pyrophosphate from the 5'-end of triphosphorylated RNA, leading to a more labile monophosphorylated state that can stimulate subsequent ribonuclease cleavage. The chain is RNA pyrophosphohydrolase from Erwinia tasmaniensis (strain DSM 17950 / CFBP 7177 / CIP 109463 / NCPPB 4357 / Et1/99).